A 106-amino-acid chain; its full sequence is Large ribosomal subunit protein bL21 (106 aa).

Belongs to the bacterial ribosomal protein bL21 family. As to quaternary structure, part of the 50S ribosomal subunit. Contacts protein L20.

In terms of biological role, this protein binds to 23S rRNA in the presence of protein L20. The polypeptide is Large ribosomal subunit protein bL21 (Xanthomonas oryzae pv. oryzae (strain MAFF 311018)).